We begin with the raw amino-acid sequence, 966 residues long: Collagen alpha-1(I) chain (966 aa).

The interval 1–966 (SYGYDEKSAG…PGPPGPPGPP (966 aa)) is disordered. K7 bears the Allysine mark. A Phosphoserine modification is found at S8. 11 positions are modified to 4-hydroxyproline: P27, P30, P32, P41, P44, P47, P61, P76, P82, P91, and P97. Residues 64–78 (NGDDGEAGKPGRPGE) show a composition bias toward basic and acidic residues. Position 100 is a 5-hydroxylysine; alternate (K100). The O-linked (Gal...) hydroxylysine; alternate glycan is linked to K100. S106 carries the post-translational modification Phosphoserine. Residues 114–130 (DAGPAGPKGEPGSPGEN) show a composition bias toward low complexity. 16 positions are modified to 4-hydroxyproline: P124, P127, P133, P142, P148, P169, P178, P181, P208, P211, P223, P229, P238, P244, P247, and P262. The segment covering 148–166 (PGASGPAGARGNDGATGAA) has biased composition (low complexity). Residues 168-180 (PPGPTGPAGPPGF) show a composition bias toward pro residues. The segment covering 214–253 (AGAAGPAGNPGADGQPGAKGANGAPGIAGAPGFPGARGPS) has biased composition (low complexity). At K265 the chain carries 5-hydroxylysine. 4-hydroxyproline is present on residues P271, P274, P286, P295, P310, P316, P325, and P331. Residues 320–329 (GERGGPGSRG) are compositionally biased toward gly residues. K340 carries the post-translational modification 5-hydroxylysine. 4-hydroxyproline is present on residues P349, P358, P364, P370, P379, P382, P391, P400, P406, P418, P427, P436, P439, P457, P475, P481, P487, P493, P499, P505, P517, P526, P538, P542, P548, P554, and P563. Low complexity predominate over residues 373 to 399 (KGLTGSPGSPGPDGKTGPPGPAGQDGR). Positions 408 to 427 (ARGQAGVMGFPGPKGAAGEP) are enriched in low complexity. Positions 469 to 496 (QGPAGSPGFQGLPGPAGPPGEAGKPGEQ) are enriched in low complexity. A 5-hydroxylysine modification is found at K575. 4-hydroxyproline occurs at positions 581, 596, and 602. Residues 608 to 622 (SGPSGPAGPTGARGA) show a composition bias toward low complexity. S611 carries the phosphoserine modification. P623, P629, P632, P641, P647, P665, P674, and P683 each carry 4-hydroxyproline. The segment covering 635–662 (AGFAGPPGADGQPGAKGEPGDAGAKGDA) has biased composition (low complexity). The span at 664–676 (PPGPAGPTGPPGP) shows a compositional bias: pro residues. K686 carries the 5-hydroxylysine modification. Over residues 691–707 (SAGPPGATGFPGAAGRV) the composition is skewed to low complexity. 4-hydroxyproline is present on residues P695 and P701. 3-hydroxyproline is present on P709. P710, P719, P722, P746, P755, P773, P782, P785, P791, P806, P812, P818, P826, and P832 each carry 4-hydroxyproline. A compositionally biased stretch (low complexity) spans 736-755 (ETGPAGEKGSPGADGPAGAP). Residues 805 to 815 (PPGPVGPPGLA) are compositionally biased toward pro residues. A compositionally biased stretch (gly residues) spans 824–835 (EGPGAEGSPGRG). Low complexity predominate over residues 852-866 (AGPAGARGPAGPQGP). Positions 867-881 (RGDKGETGEQGDRGI) are enriched in basic and acidic residues. K870 bears the 5-hydroxylysine mark. K882 carries the post-translational modification 5-hydroxylysine; alternate. An O-linked (Gal...) hydroxylysine; alternate glycan is attached at K882. 4-hydroxyproline is present on residues P897, P900, P918, and P933. The segment covering 900-933 (PGEQGPSGASGPAGPRGPPGSAGSPGKDGLNGLP) has biased composition (low complexity). 3-hydroxyproline is present on P938. P939 bears the 4-hydroxyproline mark. Residues 951–966 (VGPPGPPGPPGPPGPP) are compositionally biased toward pro residues. P953 is subject to 3-hydroxyproline. 4-hydroxyproline is present on P954. P956 carries the 3-hydroxyproline modification. Residue P957 is modified to 4-hydroxyproline. Residue P959 is modified to 3-hydroxyproline. Residues P960, P963, and P966 each carry the 4-hydroxyproline modification.

It belongs to the fibrillar collagen family. Trimers of one alpha 2(I) and two alpha 1(I) chains. Post-translationally, contains mostly 4-hydroxyproline. Proline residues at the third position of the tripeptide repeating unit (G-X-Y) are hydroxylated in some or all of the chains. In terms of processing, contains 3-hydroxyproline at a few sites. This modification occurs on the first proline residue in the sequence motif Gly-Pro-Hyp, where Hyp is 4-hydroxyproline. Lysine residues at the third position of the tripeptide repeating unit (G-X-Y) are 5-hydroxylated in some or all of the chains. Post-translationally, O-glycosylated on hydroxylated lysine residues. The O-linked glycan consists of a Glc-Gal disaccharide. Expressed in bones.

It is found in the secreted. It localises to the extracellular space. Its subcellular location is the extracellular matrix. Its function is as follows. Type I collagen is a member of group I collagen (fibrillar forming collagen). This is Collagen alpha-1(I) chain from Bradypus variegatus (Brown-throated three-fingered sloth).